Reading from the N-terminus, the 557-residue chain is Aerobic glycerol-3-phosphate dehydrogenase (557 aa).

21-49 (DVVIVGGGITGAGIALDASNRGMKVALVE) contributes to the FAD binding site.

The protein belongs to the FAD-dependent glycerol-3-phosphate dehydrogenase family. FAD serves as cofactor.

The protein localises to the cytoplasm. The catalysed reaction is a quinone + sn-glycerol 3-phosphate = dihydroxyacetone phosphate + a quinol. It functions in the pathway polyol metabolism; glycerol degradation via glycerol kinase pathway; glycerone phosphate from sn-glycerol 3-phosphate (aerobic route): step 1/1. This is Aerobic glycerol-3-phosphate dehydrogenase (glpD) from Staphylococcus epidermidis (strain ATCC 35984 / DSM 28319 / BCRC 17069 / CCUG 31568 / BM 3577 / RP62A).